The chain runs to 350 residues: S-adenosylmethionine:tRNA ribosyltransferase-isomerase (350 aa).

Belongs to the QueA family. Monomer.

The protein resides in the cytoplasm. The catalysed reaction is 7-aminomethyl-7-carbaguanosine(34) in tRNA + S-adenosyl-L-methionine = epoxyqueuosine(34) in tRNA + adenine + L-methionine + 2 H(+). It functions in the pathway tRNA modification; tRNA-queuosine biosynthesis. In terms of biological role, transfers and isomerizes the ribose moiety from AdoMet to the 7-aminomethyl group of 7-deazaguanine (preQ1-tRNA) to give epoxyqueuosine (oQ-tRNA). This chain is S-adenosylmethionine:tRNA ribosyltransferase-isomerase, found in Vibrio vulnificus (strain YJ016).